Reading from the N-terminus, the 462-residue chain is Glutamate--tRNA ligase 1 (462 aa).

Residues 8–18 (PSPTGYLHIGG) carry the 'HIGH' region motif. Residues 237 to 241 (KLSKR) carry the 'KMSKS' region motif. Lysine 240 is a binding site for ATP.

Belongs to the class-I aminoacyl-tRNA synthetase family. Glutamate--tRNA ligase type 1 subfamily. In terms of assembly, monomer.

It localises to the cytoplasm. The catalysed reaction is tRNA(Glu) + L-glutamate + ATP = L-glutamyl-tRNA(Glu) + AMP + diphosphate. Functionally, catalyzes the attachment of glutamate to tRNA(Glu) in a two-step reaction: glutamate is first activated by ATP to form Glu-AMP and then transferred to the acceptor end of tRNA(Glu). This chain is Glutamate--tRNA ligase 1, found in Campylobacter hominis (strain ATCC BAA-381 / DSM 21671 / CCUG 45161 / LMG 19568 / NCTC 13146 / CH001A).